A 345-amino-acid polypeptide reads, in one-letter code: sn-glycerol-3-phosphate import ATP-binding protein UgpC (345 aa).

Residues 4 to 235 form the ABC transporter domain; that stretch reads IQLLNIKKQY…PKTIFVADFI (232 aa). 37 to 44 lines the ATP pocket; it reads GPSGCGKS.

The protein belongs to the ABC transporter superfamily. sn-glycerol-3-phosphate importer (TC 3.A.1.1.3) family. The complex is composed of two ATP-binding proteins (UgpC), two transmembrane proteins (UgpA and UgpE) and a solute-binding protein (UgpB).

The protein localises to the cell inner membrane. The enzyme catalyses sn-glycerol 3-phosphate(out) + ATP + H2O = sn-glycerol 3-phosphate(in) + ADP + phosphate + H(+). In terms of biological role, part of the ABC transporter complex UgpBAEC involved in sn-glycerol-3-phosphate (G3P) import. Responsible for energy coupling to the transport system. This is sn-glycerol-3-phosphate import ATP-binding protein UgpC from Bartonella bacilliformis (strain ATCC 35685 / KC583 / Herrer 020/F12,63).